The chain runs to 511 residues: Cytochrome P450 76C4 (511 aa).

Residues 3–23 (IISGQALFLLFCFISSCFLIS) form a helical membrane-spanning segment. Residue Cys450 coordinates heme.

Belongs to the cytochrome P450 family. The cofactor is heme.

It localises to the membrane. In Arabidopsis thaliana (Mouse-ear cress), this protein is Cytochrome P450 76C4 (CYP76C4).